The primary structure comprises 189 residues: Chitin synthase 1 (189 aa).

This sequence belongs to the chitin synthase family.

It is found in the cell membrane. The enzyme catalyses [(1-&gt;4)-N-acetyl-beta-D-glucosaminyl](n) + UDP-N-acetyl-alpha-D-glucosamine = [(1-&gt;4)-N-acetyl-beta-D-glucosaminyl](n+1) + UDP + H(+). Polymerizes chitin, a structural polymer of the cell wall and septum, by transferring the sugar moiety of UDP-GlcNAc to the non-reducing end of the growing chitin polymer. The chain is Chitin synthase 1 (CHS1) from Exophiala exophialae (Black yeast-like fungus).